Consider the following 261-residue polypeptide: MRIDVISLFPEFIKQSVGFGVIGRAQERGLLDLHNWNPRDYAQGNYRRVDDRPFGGGPGMVMLIEPLRACLEAVRAADPQPAPLIYLSPQGVLLNQSRARKLAMLPRMILLCGRYEGIDERFIAHEVNMELSIGDYVLSGGELGAAVVVDAVTRLQEGVLNDAESAKQDSFEAADSLFDYPHYTHPSNHAFGNVPEVLRSGNHVAITRWRRQQSLLRTWLRRPDLIDEARLSKADRLLLDEIKRTHPMDTDRKASASWRGA.

Residues G113 and 133 to 138 (IGDYVL) contribute to the S-adenosyl-L-methionine site.

Belongs to the RNA methyltransferase TrmD family. As to quaternary structure, homodimer.

It is found in the cytoplasm. It catalyses the reaction guanosine(37) in tRNA + S-adenosyl-L-methionine = N(1)-methylguanosine(37) in tRNA + S-adenosyl-L-homocysteine + H(+). In terms of biological role, specifically methylates guanosine-37 in various tRNAs. The sequence is that of tRNA (guanine-N(1)-)-methyltransferase from Xylella fastidiosa (strain M23).